Here is a 149-residue protein sequence, read N- to C-terminus: Nucleoside diphosphate kinase (149 aa).

ATP-binding residues include Lys-9, Phe-57, Arg-85, Thr-91, Arg-102, and Asn-112. His-115 functions as the Pros-phosphohistidine intermediate in the catalytic mechanism.

This sequence belongs to the NDK family. As to quaternary structure, homotetramer. Mg(2+) is required as a cofactor.

The protein resides in the cytoplasm. The enzyme catalyses a 2'-deoxyribonucleoside 5'-diphosphate + ATP = a 2'-deoxyribonucleoside 5'-triphosphate + ADP. The catalysed reaction is a ribonucleoside 5'-diphosphate + ATP = a ribonucleoside 5'-triphosphate + ADP. Functionally, major role in the synthesis of nucleoside triphosphates other than ATP. The ATP gamma phosphate is transferred to the NDP beta phosphate via a ping-pong mechanism, using a phosphorylated active-site intermediate. The protein is Nucleoside diphosphate kinase of Acaryochloris marina (strain MBIC 11017).